The primary structure comprises 232 residues: DNA repair and recombination protein RadB (232 aa).

It belongs to the eukaryotic RecA-like protein family. RadB subfamily.

Involved in DNA repair and in homologous recombination. May regulate the cleavage reactions of the branch-structured DNA. Has a very weak ATPase activity that is not stimulated by DNA. Binds DNA but does not promote DNA strands exchange. The sequence is that of DNA repair and recombination protein RadB from Methanosphaera stadtmanae (strain ATCC 43021 / DSM 3091 / JCM 11832 / MCB-3).